The sequence spans 507 residues: Chromosomal replication initiator protein DnaA (507 aa).

Positions 1–112 (MTDDPGSGFT…PATDEADDTT (112 aa)) are domain I, interacts with DnaA modulators. The segment at 99–155 (RIAPPATDEADDTTVPPSENPATTSPDTTTDNDEIDDSAAARGDNQHSWPSYFTERP) is disordered. Over residues 113-127 (VPPSENPATTSPDTT) the composition is skewed to polar residues. Residues 113–166 (VPPSENPATTSPDTTTDNDEIDDSAAARGDNQHSWPSYFTERPHNTDSATAGVT) are domain II. Positions 167–383 (SLNRRYTFDT…GALIRVTAFA (217 aa)) are domain III, AAA+ region. ATP-binding residues include G211, G213, K214, and T215. The interval 384 to 507 (SLNKTPIDKA…TTRIRQRSKR (124 aa)) is domain IV, binds dsDNA.

It belongs to the DnaA family. Oligomerizes as a right-handed, spiral filament on DNA at oriC.

Its subcellular location is the cytoplasm. Plays an essential role in the initiation and regulation of chromosomal replication. ATP-DnaA binds to the origin of replication (oriC) to initiate formation of the DNA replication initiation complex once per cell cycle. Binds the DnaA box (a 9 base pair repeat at the origin) and separates the double-stranded (ds)DNA. Forms a right-handed helical filament on oriC DNA; dsDNA binds to the exterior of the filament while single-stranded (ss)DNA is stabiized in the filament's interior. The ATP-DnaA-oriC complex binds and stabilizes one strand of the AT-rich DNA unwinding element (DUE), permitting loading of DNA polymerase. After initiation quickly degrades to an ADP-DnaA complex that is not apt for DNA replication. Binds acidic phospholipids. The sequence is that of Chromosomal replication initiator protein DnaA from Mycobacterium tuberculosis (strain ATCC 25177 / H37Ra).